Consider the following 143-residue polypeptide: Transcriptional regulator MraZ (143 aa).

SpoVT-AbrB domains are found at residues 5 to 47 (TYTP…PREE) and 76 to 119 (TDEQ…DAQA).

The protein belongs to the MraZ family. As to quaternary structure, forms oligomers.

The protein localises to the cytoplasm. It is found in the nucleoid. This chain is Transcriptional regulator MraZ, found in Rhodococcus opacus (strain B4).